The chain runs to 476 residues: Aspartyl/glutamyl-tRNA(Asn/Gln) amidotransferase subunit B (476 aa).

Belongs to the GatB/GatE family. GatB subfamily. Heterotrimer of A, B and C subunits.

The enzyme catalyses L-glutamyl-tRNA(Gln) + L-glutamine + ATP + H2O = L-glutaminyl-tRNA(Gln) + L-glutamate + ADP + phosphate + H(+). The catalysed reaction is L-aspartyl-tRNA(Asn) + L-glutamine + ATP + H2O = L-asparaginyl-tRNA(Asn) + L-glutamate + ADP + phosphate + 2 H(+). Functionally, allows the formation of correctly charged Asn-tRNA(Asn) or Gln-tRNA(Gln) through the transamidation of misacylated Asp-tRNA(Asn) or Glu-tRNA(Gln) in organisms which lack either or both of asparaginyl-tRNA or glutaminyl-tRNA synthetases. The reaction takes place in the presence of glutamine and ATP through an activated phospho-Asp-tRNA(Asn) or phospho-Glu-tRNA(Gln). The polypeptide is Aspartyl/glutamyl-tRNA(Asn/Gln) amidotransferase subunit B (Bacillus velezensis (strain DSM 23117 / BGSC 10A6 / LMG 26770 / FZB42) (Bacillus amyloliquefaciens subsp. plantarum)).